We begin with the raw amino-acid sequence, 500 residues long: Glycerol kinase (500 aa).

Threonine 17 contributes to the ADP binding site. ATP-binding residues include threonine 17, threonine 18, and serine 19. Position 17 (threonine 17) interacts with sn-glycerol 3-phosphate. ADP is bound at residue arginine 21. Positions 87, 88, 139, and 243 each coordinate sn-glycerol 3-phosphate. Glycerol-binding residues include arginine 87, glutamate 88, tyrosine 139, aspartate 243, and glutamine 244. The ADP site is built by threonine 265 and glycine 308. 4 residues coordinate ATP: threonine 265, glycine 308, glutamine 312, and glycine 409. Positions 409 and 413 each coordinate ADP.

Belongs to the FGGY kinase family.

The enzyme catalyses glycerol + ATP = sn-glycerol 3-phosphate + ADP + H(+). Its pathway is polyol metabolism; glycerol degradation via glycerol kinase pathway; sn-glycerol 3-phosphate from glycerol: step 1/1. Inhibited by fructose 1,6-bisphosphate (FBP). Its function is as follows. Key enzyme in the regulation of glycerol uptake and metabolism. Catalyzes the phosphorylation of glycerol to yield sn-glycerol 3-phosphate. The sequence is that of Glycerol kinase from Pseudomonas fluorescens (strain Pf0-1).